A 419-amino-acid polypeptide reads, in one-letter code: Gamma-glutamyl phosphate reductase (419 aa).

This sequence belongs to the gamma-glutamyl phosphate reductase family.

It is found in the cytoplasm. The catalysed reaction is L-glutamate 5-semialdehyde + phosphate + NADP(+) = L-glutamyl 5-phosphate + NADPH + H(+). The protein operates within amino-acid biosynthesis; L-proline biosynthesis; L-glutamate 5-semialdehyde from L-glutamate: step 2/2. Its function is as follows. Catalyzes the NADPH-dependent reduction of L-glutamate 5-phosphate into L-glutamate 5-semialdehyde and phosphate. The product spontaneously undergoes cyclization to form 1-pyrroline-5-carboxylate. In Syntrophomonas wolfei subsp. wolfei (strain DSM 2245B / Goettingen), this protein is Gamma-glutamyl phosphate reductase.